The primary structure comprises 300 residues: 33 kDa chaperonin (300 aa).

Disulfide bonds link cysteine 247-cysteine 249 and cysteine 280-cysteine 283.

Belongs to the HSP33 family. Post-translationally, under oxidizing conditions two disulfide bonds are formed involving the reactive cysteines. Under reducing conditions zinc is bound to the reactive cysteines and the protein is inactive.

The protein resides in the cytoplasm. Redox regulated molecular chaperone. Protects both thermally unfolding and oxidatively damaged proteins from irreversible aggregation. Plays an important role in the bacterial defense system toward oxidative stress. This Prochlorococcus marinus (strain MIT 9515) protein is 33 kDa chaperonin.